A 175-amino-acid chain; its full sequence is uncharacterized protein (175 aa).

The transit peptide at 1-11 (METWRKGSFRN) directs the protein to the mitochondrion. The interval 29 to 48 (QGSILSQASTAGGDHEEYSN) is disordered.

The protein resides in the mitochondrion. This is an uncharacterized protein from Mus musculus (Mouse).